A 396-amino-acid chain; its full sequence is LIM/homeobox protein Lhx9 (396 aa).

2 consecutive LIM zinc-binding domains span residues 69 to 130 (ALCA…RFSV) and 131 to 193 (QRCA…LIQG). Disordered regions lie at residues 248-272 (ENDA…RMRT), 328-365 (RQEN…TDLT), and 377-396 (SSLD…TNLF). Positions 267 to 326 (TKRMRTSFKHHQLRTMKSYFAINHNPDAKDLKQLAQKTGLTKRVLQVWFQNARAKFRRNV) form a DNA-binding region, homeobox. Residues 352 to 365 (LTPPSTATTLTDLT) are compositionally biased toward low complexity. Positions 384–396 (SGSPPQTTLTNLF) are enriched in polar residues.

The protein localises to the nucleus. Its function is as follows. May be involved in gonadal development. The polypeptide is LIM/homeobox protein Lhx9 (lhx9) (Danio rerio (Zebrafish)).